Consider the following 221-residue polypeptide: Epididymal secretory glutathione peroxidase (221 aa).

The signal sequence occupies residues 1–21 (MVTELRVFYLVPLLLASYVQT). Cys-73 is an active-site residue.

It belongs to the glutathione peroxidase family. In terms of tissue distribution, epididymis.

It is found in the secreted. It carries out the reaction 2 glutathione + H2O2 = glutathione disulfide + 2 H2O. Its function is as follows. Protects cells and enzymes from oxidative damage, by catalyzing the reduction of hydrogen peroxide, lipid peroxides and organic hydroperoxide, by glutathione. May constitute a glutathione peroxidase-like protective system against peroxide damage in sperm membrane lipids. The sequence is that of Epididymal secretory glutathione peroxidase (Gpx5) from Mus musculus (Mouse).